A 249-amino-acid polypeptide reads, in one-letter code: Protein TIFY 10B (249 aa).

The 36-residue stretch at 113-148 (PESQSAPLTIFYGGRVMVFDDFSAEKAKEVIDLANK) folds into the Tify domain. Positions 204 to 229 (PIARRASLHRFLEKRKDRITSKAPYQ) match the Jas motif. A Nuclear localization signal motif is present at residues 206–213 (ARRASLHR). Positions 225–249 (KAPYQIDGSAEASSKPTNPAWLSSR) are disordered. The span at 235 to 249 (EASSKPTNPAWLSSR) shows a compositional bias: polar residues.

The protein belongs to the TIFY/JAZ family. As to quaternary structure, homo- and heterodimer. Interacts with COI1, MYC2, MYC3, MYC4, AFPH2/NINJA, TIFY10A/JAZ1, TIFY6B/JAZ3, TIFY11A/JAZ5, TIFY11B/JAZ6, TIFY5A/JAZ8, TIFY7/JAZ9, TIFY9/JAZ10, TIFY3A/JAZ11 and TIFY3B/JAZ12. Interacts with RHD6 and RSL1. (Microbial infection) Interacts with the pathogenic Pseudomonas syringae HopZ1a protein. In terms of processing, (Microbial infection) Acetylated by Pseudomonas syringae HopZ1a. Ubiquitinated. Targeted for degradation by the SCF(COI1) E3 ubiquitin ligase-proteasome pathway during jasmonate signaling. Expressed in cotyledons, hypocotyls, roots, sepals, petal vascular tissue and stigmas of developing flowers. Expressed in stamen filaments after jasmonic acid treatment.

The protein localises to the nucleus. Functionally, repressor of jasmonate responses. Jasmonoyl-isoleucine (JA-Ile) specifically promotes COI1-TIFY10B/JAZ2 interaction. Activated by MYC2, MYC3 and MYC4 transcription factors. Interacts with and suppresses RHD6 and RSL1 transcription factor activities to negatively regulate jasmonate-stimulated root hair development. This chain is Protein TIFY 10B, found in Arabidopsis thaliana (Mouse-ear cress).